We begin with the raw amino-acid sequence, 161 residues long: Nucleotide-binding protein Mmc1_1670 (161 aa).

It belongs to the YajQ family.

Nucleotide-binding protein. The protein is Nucleotide-binding protein Mmc1_1670 of Magnetococcus marinus (strain ATCC BAA-1437 / JCM 17883 / MC-1).